Here is a 416-residue protein sequence, read N- to C-terminus: Enolase (416 aa).

Residue Gln-160 participates in (2R)-2-phosphoglycerate binding. Residue Glu-204 is the Proton donor of the active site. 3 residues coordinate Mg(2+): Asp-239, Glu-280, and Asp-306. 4 residues coordinate (2R)-2-phosphoglycerate: Lys-331, Arg-360, Ser-361, and Lys-382. Catalysis depends on Lys-331, which acts as the Proton acceptor.

The protein belongs to the enolase family. The cofactor is Mg(2+).

The protein localises to the cytoplasm. The protein resides in the secreted. It is found in the cell surface. It catalyses the reaction (2R)-2-phosphoglycerate = phosphoenolpyruvate + H2O. Its pathway is carbohydrate degradation; glycolysis; pyruvate from D-glyceraldehyde 3-phosphate: step 4/5. Its function is as follows. Catalyzes the reversible conversion of 2-phosphoglycerate (2-PG) into phosphoenolpyruvate (PEP). It is essential for the degradation of carbohydrates via glycolysis. The sequence is that of Enolase from Sulfolobus acidocaldarius (strain ATCC 33909 / DSM 639 / JCM 8929 / NBRC 15157 / NCIMB 11770).